Consider the following 374-residue polypeptide: 3-dehydroquinate synthase (374 aa).

It belongs to the archaeal-type DHQ synthase family.

It carries out the reaction 2-amino-2,3,7-trideoxy-D-lyxo-hept-6-ulosonate + NAD(+) + H2O = 3-dehydroquinate + NH4(+) + NADH + H(+). Functionally, catalyzes the oxidative deamination and cyclization of 2-amino-3,7-dideoxy-D-threo-hept-6-ulosonic acid (ADH) to yield 3-dehydroquinate (DHQ), which is fed into the canonical shikimic pathway of aromatic amino acid biosynthesis. This Methanocella arvoryzae (strain DSM 22066 / NBRC 105507 / MRE50) protein is 3-dehydroquinate synthase.